The primary structure comprises 686 residues: Acyl-CoA synthetase short-chain family member 3, mitochondrial (686 aa).

The transit peptide at 1-29 directs the protein to the mitochondrion; the sequence is MKPSWLQCRKVTSAGGLGGPLPGSSPARG. 227–230 lines the CoA pocket; that stretch reads EPGR. ATP-binding positions include 425-427 and 446-451; these read GER and DHWWQT. N6-succinyllysine is present on lysine 518. Residue lysine 524 is modified to N6-acetyllysine. Residues aspartate 539, arginine 554, and arginine 565 each contribute to the ATP site. Residue arginine 624 coordinates CoA.

It belongs to the ATP-dependent AMP-binding enzyme family.

The protein resides in the mitochondrion matrix. It catalyses the reaction acetate + ATP + CoA = acetyl-CoA + AMP + diphosphate. It carries out the reaction propanoate + ATP + CoA = propanoyl-CoA + AMP + diphosphate. The enzyme catalyses butanoate + ATP + CoA = butanoyl-CoA + AMP + diphosphate. In terms of biological role, catalyzes the synthesis of acetyl-CoA from short-chain fatty acids. Propionate is the preferred substrate. Can utilize acetate and butyrate with a much lower affinity. The protein is Acyl-CoA synthetase short-chain family member 3, mitochondrial (ACSS3) of Homo sapiens (Human).